Consider the following 751-residue polypeptide: Nibrin (751 aa).

The FHA domain maps to 24-83; that stretch reads YVVGRKNCGILIENDQSISRNHAVLTVNFPVTSLSQTDEIPTLTIKDNSKYGTFVNEEKM. 2 consecutive BRCT domains span residues 105–181 and 224–315; these read KFRV…SEFL and GKTF…LAVI. The interval 111–328 is mediates interaction with SP100; the sequence is EPLVVCSSCL…TENYCNPQGQ (218 aa). Residues 221–403 form an interaction with MTOR, MAPKAP1 and RICTOR region; sequence IFKGKTFVFL…SRKLSQETFN (183 aa). Thr-337 bears the Phosphothreonine mark. Residue Ser-343 is modified to Phosphoserine; by ATM. Ser-347 and Ser-398 each carry phosphoserine. The interval 389–418 is disordered; the sequence is GLEQSSRKLSQETFNIKEAPKPSSKANNVA. Position 433 is a phosphoserine; by CDK2 (Ser-433). Lys-436 is covalently cross-linked (Glycyl lysine isopeptide (Lys-Gly) (interchain with G-Cter in ubiquitin)). Disordered stretches follow at residues 444–479 and 491–550; these read KDWT…SSCK and EQTQ…RKRK. A compositionally biased stretch (polar residues) spans 446–457; sequence WTSQQQQNSIKN. The Nuclear localization signal motif lies at 461–467; that stretch reads PCTRKRE. Composition is skewed to basic and acidic residues over residues 502–518 and 528–539; these read KSKE…READ and ELNRKSPDRKPL. A Phosphoserine modification is found at Ser-508. Glycyl lysine isopeptide (Lys-Gly) (interchain with G-Cter in SUMO2) cross-links involve residues Lys-569 and Lys-580. Residues 576–645 form a disordered region; it reads VKVEKQEADD…ANSDGLQDSS (70 aa). Basic and acidic residues-rich tracts occupy residues 577-599 and 615-636; these read KVEK…ERNR and EDER…HEIA. Glycyl lysine isopeptide (Lys-Gly) (interchain with G-Cter in ubiquitin) cross-links involve residues Lys-684, Lys-688, and Lys-733. The span at 731–742 shows a compositional bias: basic and acidic residues; that stretch reads QAKEESLADDLF. Residues 731–751 are disordered; it reads QAKEESLADDLFRYNPNVKRR. The FxF/Y motif motif lies at 738–747; the sequence is ADDLFRYNPN.

It belongs to the Nibrin family. As to quaternary structure, component of the MRN complex composed of two heterodimers RAD50 and MRE11 associated with a single NBN. The MRN complexes dimerize on DNA to form joined MRN-MRN oligomers required for DNA double-strand break repair. As part of the MRN complex, interacts with MCM9; the interaction recruits the complex to DNA repair sites. Component of the BASC complex, at least composed of BRCA1, MSH2, MSH6, MLH1, ATM, BLM, RAD50, MRE11 and NBN. Interacts with histone H2AX; this requires phosphorylation of H2AX on 'Ser-139' and promotes NBN recruitment to DNA damage sites. Interacts with (phosphorylated) MDC1; promoting NBN recruitment to DNA damage sites. Interacts with (phosphorylated) RAD17; promoting NBN recruitment to DNA damage sites. Interacts (via FxF/Y motif) with ATM. Interacts with HJURP. Interacts with INTS3. Interacts with KPNA2. Interacts with TERF2; interaction is disrupted upon NBN phosphorylation by CDK2. Interacts with (phosphorylated) RBBP8/CtIP; the interaction links the role of the MRN complex in DNA double-strand break sensing to resection. Interacts with SP100; recruits NBN to PML bodies. Interacts with ATF2. Interacts with MTOR, MAPKAP1 isoform 2 and RICTOR; indicative for an association with the mTORC2 complex. Interacts with MRNIP. Interacts with UFL1; promoting UFL1 recruitment to double-strand breaks following DNA damage. Interacts with CYREN (via XLF motif). Post-translationally, ubiquitinated at Lys-436 via 'Lys-6'-linked ubiquitin chains by RNF8, promoting NBN recruitment to DNA double-strand breaks (DSBs). Ubiquitinated at Lys-684 and Lys-688 via 'Lys-63'-linked ubiquitin chains by PELI1: ubiquitination takes place following PELI1 phosphorylation and promotes ATM activation and DNA repair. Ubiquitinated at Lys-733 via 'Lys-63'-linked ubiquitin chains by the SCF(SKP2) complex: ubiquitination takes place following SKP2 phosphorylation and promotes ATM activation and DNA repair. Phosphorylated by ATM in response of ionizing radiation, and such phosphorylation is responsible intra-S phase checkpoint control and telomere maintenance. Phosphorylated at Ser-433 by CDK2 in S/G2 phases abolishes interaction with TERF2, enabling DCLRE1B/Apollo recruitment to telomeres. Phosphorylation at Ser-433 in response to dysfunctional telomeres promotes non-homologous end joining repair at telomeres, while dephosphorylation by PPP1CA promotes microhomology-mediated end-joining (MMEJ) repair. As to expression, high expression in the liver, heart and testis. Low expression in all other tissues analyzed. In the cerebellum the postmitotic Purkinje cells are marked specifically.

The protein localises to the nucleus. It localises to the chromosome. Its subcellular location is the PML body. It is found in the telomere. Its function is as follows. Component of the MRN complex, which plays a central role in double-strand break (DSB) repair, DNA recombination, maintenance of telomere integrity and meiosis. The MRN complex is involved in the repair of DNA double-strand breaks (DSBs) via homologous recombination (HR), an error-free mechanism which primarily occurs during S and G2 phases. The complex (1) mediates the end resection of damaged DNA, which generates proper single-stranded DNA, a key initial steps in HR, and is (2) required for the recruitment of other repair factors and efficient activation of ATM and ATR upon DNA damage. The MRN complex possesses single-strand endonuclease activity and double-strand-specific 3'-5' exonuclease activity, which are provided by MRE11, to initiate end resection, which is required for single-strand invasion and recombination. Within the MRN complex, NBN acts as a protein-protein adapter, which specifically recognizes and binds phosphorylated proteins, promoting their recruitment to DNA damage sites. Recruits MRE11 and RAD50 components of the MRN complex to DSBs in response to DNA damage. Promotes the recruitment of PI3/PI4-kinase family members ATM, ATR, and probably DNA-PKcs to the DNA damage sites, activating their functions. Mediates the recruitment of phosphorylated RBBP8/CtIP to DSBs, leading to cooperation between the MRN complex and RBBP8/CtIP to initiate end resection. RBBP8/CtIP specifically promotes the endonuclease activity of the MRN complex to clear DNA ends containing protein adducts. The MRN complex is also required for the processing of R-loops. NBN also functions in telomere length maintenance via its interaction with TERF2: interaction with TERF2 during G1 phase preventing recruitment of DCLRE1B/Apollo to telomeres. NBN also promotes DNA repair choice at dysfunctional telomeres: NBN phosphorylation by CDK2 promotes non-homologous end joining repair at telomeres, while unphosphorylated NBN promotes microhomology-mediated end-joining (MMEJ) repair. Enhances AKT1 phosphorylation possibly by association with the mTORC2 complex. The chain is Nibrin from Mus musculus (Mouse).